A 343-amino-acid polypeptide reads, in one-letter code: Uroporphyrinogen decarboxylase (343 aa).

Substrate contacts are provided by residues 23–27, D73, Y151, S206, and H322; that span reads RQAGR.

Belongs to the uroporphyrinogen decarboxylase family. Homodimer.

The protein resides in the cytoplasm. The enzyme catalyses uroporphyrinogen III + 4 H(+) = coproporphyrinogen III + 4 CO2. Its pathway is porphyrin-containing compound metabolism; protoporphyrin-IX biosynthesis; coproporphyrinogen-III from 5-aminolevulinate: step 4/4. Catalyzes the decarboxylation of four acetate groups of uroporphyrinogen-III to yield coproporphyrinogen-III. The protein is Uroporphyrinogen decarboxylase of Granulibacter bethesdensis (strain ATCC BAA-1260 / CGDNIH1).